The chain runs to 256 residues: tRNA (guanine-N(7)-)-methyltransferase (256 aa).

Positions 85, 110, 137, and 159 each coordinate S-adenosyl-L-methionine. Aspartate 159 is a catalytic residue. Lysine 163 and aspartate 195 together coordinate substrate.

This sequence belongs to the class I-like SAM-binding methyltransferase superfamily. TrmB family.

The catalysed reaction is guanosine(46) in tRNA + S-adenosyl-L-methionine = N(7)-methylguanosine(46) in tRNA + S-adenosyl-L-homocysteine. It functions in the pathway tRNA modification; N(7)-methylguanine-tRNA biosynthesis. Its function is as follows. Catalyzes the formation of N(7)-methylguanine at position 46 (m7G46) in tRNA. This is tRNA (guanine-N(7)-)-methyltransferase from Rhodopseudomonas palustris (strain BisB5).